Consider the following 275-residue polypeptide: Large ribosomal subunit protein uL2c (275 aa).

2 disordered regions span residues 32 to 53 (SLSK…TCRH) and 218 to 242 (PTVR…APIG).

It belongs to the universal ribosomal protein uL2 family. As to quaternary structure, part of the 50S ribosomal subunit.

The protein localises to the plastid. The protein resides in the chloroplast. This is Large ribosomal subunit protein uL2c (rpl2) from Tetradesmus obliquus (Green alga).